The chain runs to 267 residues: Translation initiation factor 2 subunit alpha (267 aa).

Residues 17–88 (GEIVIGTVKR…KRGHIDLSIK (72 aa)) enclose the S1 motif domain.

Belongs to the eIF-2-alpha family. In terms of assembly, heterotrimer composed of an alpha, a beta and a gamma chain.

Functionally, eIF-2 functions in the early steps of protein synthesis by forming a ternary complex with GTP and initiator tRNA. The chain is Translation initiation factor 2 subunit alpha (eif2a) from Archaeoglobus fulgidus (strain ATCC 49558 / DSM 4304 / JCM 9628 / NBRC 100126 / VC-16).